The chain runs to 61 residues: Disintegrin rubistatin (61 aa).

In terms of domain architecture, Disintegrin spans 1–61; that stretch reads NPCCDAATCK…ADCPRNGLYG (61 aa). Cystine bridges form between cysteine 3–cysteine 26, cysteine 17–cysteine 23, cysteine 22–cysteine 47, and cysteine 35–cysteine 54. The Cell attachment site; atypical (MVD) signature appears at 39-41; sequence MVD.

The protein belongs to the venom metalloproteinase (M12B) family. P-II subfamily. P-IIa sub-subfamily. In terms of assembly, monomer. In terms of tissue distribution, expressed by the venom gland.

The protein resides in the secreted. In terms of biological role, recombinant disintegrin rubistatin inhibits ADP-induced platelet aggregation. In addition, it strongly induces apoptosis, and inhibits cell migration and proliferation of the human cancer cell line SK-Mel-28. The sequence is that of Disintegrin rubistatin from Crotalus ruber ruber (Red diamond rattlesnake).